We begin with the raw amino-acid sequence, 236 residues long: LexA repressor (236 aa).

Residues 1 to 25 form a disordered region; that stretch reads MNDSNDTSVAGGAAGADSRVLSADS. The segment at residues 51–71 is a DNA-binding region (H-T-H motif); sequence IREIGDAVGLTSTSSVAHQLR. Catalysis depends on for autocatalytic cleavage activity residues Ser160 and Lys197.

It belongs to the peptidase S24 family. As to quaternary structure, homodimer.

It carries out the reaction Hydrolysis of Ala-|-Gly bond in repressor LexA.. Represses a number of genes involved in the response to DNA damage (SOS response), including recA and lexA. In the presence of single-stranded DNA, RecA interacts with LexA causing an autocatalytic cleavage which disrupts the DNA-binding part of LexA, leading to derepression of the SOS regulon and eventually DNA repair. The polypeptide is LexA repressor (Mycobacterium bovis (strain BCG / Pasteur 1173P2)).